A 198-amino-acid chain; its full sequence is FMN-dependent NADH:quinone oxidoreductase (198 aa).

FMN contacts are provided by residues 92–95 and 136–139; these read MWNL and SRGG.

This sequence belongs to the azoreductase type 1 family. As to quaternary structure, homodimer. FMN serves as cofactor.

It carries out the reaction 2 a quinone + NADH + H(+) = 2 a 1,4-benzosemiquinone + NAD(+). The catalysed reaction is N,N-dimethyl-1,4-phenylenediamine + anthranilate + 2 NAD(+) = 2-(4-dimethylaminophenyl)diazenylbenzoate + 2 NADH + 2 H(+). Its function is as follows. Quinone reductase that provides resistance to thiol-specific stress caused by electrophilic quinones. Functionally, also exhibits azoreductase activity. Catalyzes the reductive cleavage of the azo bond in aromatic azo compounds to the corresponding amines. The polypeptide is FMN-dependent NADH:quinone oxidoreductase (Clostridium perfringens (strain ATCC 13124 / DSM 756 / JCM 1290 / NCIMB 6125 / NCTC 8237 / Type A)).